The sequence spans 236 residues: Small ribosomal subunit protein uS2c (236 aa).

It belongs to the universal ribosomal protein uS2 family.

It is found in the plastid. The protein localises to the chloroplast. This Chloranthus spicatus (Chulantree) protein is Small ribosomal subunit protein uS2c (rps2).